An 89-amino-acid chain; its full sequence is Small ribosomal subunit protein uS17 (89 aa).

Belongs to the universal ribosomal protein uS17 family. In terms of assembly, part of the 30S ribosomal subunit.

One of the primary rRNA binding proteins, it binds specifically to the 5'-end of 16S ribosomal RNA. This Stenotrophomonas maltophilia (strain K279a) protein is Small ribosomal subunit protein uS17.